The chain runs to 300 residues: MPHTDKKQSGLARLLGSASAGIMEIAVFHPVDTISKRLMSNHTKITSGQELNRVIFRDHFSEPLGKRLFTLFPGLGYAASYKVLQRVYKYGGQPFANEFLNKHYKKDFDNLFGEKTGKAMRSAAAGSLIGIGEIVLLPLDVLKIKRQTNPESFKGRGFIKILRDEGLFNLYRGWGWTAARNAPGSFALFGGNAFAKEYILGLKDYSQATWSQNFISSIVGACSSLIVSAPLDVIKTRIQNRNFDNPESGLRIVKNTLKNEGVTAFFKGLTPKLLTTGPKLVFSFALAQSLIPRFDNLLSK.

3 Solcar repeats span residues Q8–F108, G117–Y198, and A208–R293. The next 6 membrane-spanning stretches (helical) occupy residues L14–I34, Q85–N101, S122–L142, G173–F189, F214–I234, and G268–A285.

This sequence belongs to the mitochondrial carrier (TC 2.A.29) family.

It localises to the mitochondrion inner membrane. Its function is as follows. Mitochondrial GTP/GDP transporter required for GTP uptake and GDP exit from mitochondria. Involved in mitochondrial iron transport and essential for mitochondrial genome maintenance. This Saccharomyces cerevisiae (strain ATCC 204508 / S288c) (Baker's yeast) protein is Mitochondrial GTP/GDP carrier protein 1 (GGC1).